The chain runs to 262 residues: Acyl-coenzyme A diphosphatase FITM2 (262 aa).

At 1–23 (MEHLERCAWFLRGTLVRATVRRH) the chain is on the cytoplasmic side. A helical transmembrane segment spans residues 24–44 (LPWALVAAMLAGSVVKELSPL). The Lumenal segment spans residues 45–57 (PESYLSNKRNVLN). The helical transmembrane segment at 58–78 (VYFVKLAWAWTVCLLLPFIAL) threads the bilayer. Over 79–93 (TNYHLTGKTSLVLRR) the chain is Cytoplasmic. A helical transmembrane segment spans residues 94-114 (LSTLLVGTAIWYICTALFSNI). Residues 115 to 145 (EHYTGSCYQSPALEGIRQEHRSKQQCHREGG) lie on the Lumenal side of the membrane. A helical membrane pass occupies residues 146–166 (FWHGFDISGHSFLLTFCALMI). His155 is a catalytic residue. The Cytoplasmic portion of the chain corresponds to 167-190 (VEEMAVLHEVKTDRGHHLHAAITT). A helical transmembrane segment spans residues 191–211 (LVVALGFLTFIWVWMFLCTAV). Residues 212–218 (YFHDLTQ) lie on the Lumenal side of the membrane. The active site involves His214. Residues 219–239 (KVFGTMFGLLGWYGTYGYWYL) traverse the membrane as a helical segment. Residues 240-262 (KSFSPGLPPQSCSLTLKRDTYKK) are Cytoplasmic-facing.

It belongs to the FIT family. In terms of tissue distribution, widely expressed, with highest levels in white and brown adipose tissues (at protein level). In the heart, mRNA expression levels do not correlate well with protein levels, suggesting post-transcriptional regulation in this organ.

The protein resides in the endoplasmic reticulum membrane. The catalysed reaction is an acyl-CoA + H2O = an acyl-4'-phosphopantetheine + adenosine 3',5'-bisphosphate + 2 H(+). The enzyme catalyses (9Z)-octadecenoyl-CoA + H2O = S-(9Z-octadecenoyl)-4'-phosphopantetheine + adenosine 3',5'-bisphosphate + 2 H(+). It catalyses the reaction (5Z,8Z,11Z,14Z)-eicosatetraenoyl-CoA + H2O = S-(5Z,8Z,11Z,14Z-eicosatetraenoyl)-4'-phosphopantetheine + adenosine 3',5'-bisphosphate + 2 H(+). It carries out the reaction hexadecanoyl-CoA + H2O = S-hexadecanoyl-4'-phosphopantetheine + adenosine 3',5'-bisphosphate + 2 H(+). In terms of biological role, fatty acyl-coenzyme A (CoA) diphosphatase that hydrolyzes fatty acyl-CoA to yield acyl-4'-phosphopantetheine and adenosine 3',5'-bisphosphate. Preferentially hydrolyzes unsaturated long-chain acyl-CoA substrates such as oleoyl-CoA/(9Z)-octadecenoyl-CoA and arachidonoyl-CoA/(5Z,8Z,11Z,14Z)-eicosatetraenoyl-CoA in the endoplasmic reticulum (ER) lumen. This catalytic activity is required for maintaining ER structure and for lipid droplets (LDs) biogenesis, which are lipid storage organelles involved in maintaining lipid and energy homeostasis. Directly binds to diacylglycerol (DAGs) and triacylglycerol, which is also important for LD biogenesis. May support directional budding of nacent LDs from the ER into the cytosol by reducing DAG levels at sites of LD formation. Plays a role in the regulation of cell morphology and cytoskeletal organization. This chain is Acyl-coenzyme A diphosphatase FITM2, found in Mus musculus (Mouse).